A 195-amino-acid polypeptide reads, in one-letter code: Putative NADH dehydrogenase/NAD(P)H nitroreductase CC_0061 (195 aa).

Belongs to the nitroreductase family. HadB/RutE subfamily. FMN serves as cofactor.

The protein is Putative NADH dehydrogenase/NAD(P)H nitroreductase CC_0061 of Caulobacter vibrioides (strain ATCC 19089 / CIP 103742 / CB 15) (Caulobacter crescentus).